The chain runs to 258 residues: Pimeloyl-[acyl-carrier protein] methyl ester esterase (258 aa).

The region spanning 16–242 is the AB hydrolase-1 domain; it reads LVLLHGWGLN…AAHAPFISHP (227 aa). Substrate is bound by residues Trp-22, 82-83, and 143-147; these read SL and FLALQ. Catalysis depends on Ser-82, which acts as the Nucleophile. Active-site residues include Asp-207 and His-235. Position 235 (His-235) interacts with substrate.

It belongs to the AB hydrolase superfamily. Carboxylesterase BioH family. In terms of assembly, monomer.

It localises to the cytoplasm. It carries out the reaction 6-carboxyhexanoyl-[ACP] methyl ester + H2O = 6-carboxyhexanoyl-[ACP] + methanol + H(+). Its pathway is cofactor biosynthesis; biotin biosynthesis. Functionally, the physiological role of BioH is to remove the methyl group introduced by BioC when the pimeloyl moiety is complete. It allows to synthesize pimeloyl-ACP via the fatty acid synthetic pathway through the hydrolysis of the ester bonds of pimeloyl-ACP esters. The sequence is that of Pimeloyl-[acyl-carrier protein] methyl ester esterase from Edwardsiella ictaluri (strain 93-146).